The sequence spans 365 residues: Aminomethyltransferase (365 aa).

Belongs to the GcvT family. The glycine cleavage system is composed of four proteins: P, T, L and H.

It carries out the reaction N(6)-[(R)-S(8)-aminomethyldihydrolipoyl]-L-lysyl-[protein] + (6S)-5,6,7,8-tetrahydrofolate = N(6)-[(R)-dihydrolipoyl]-L-lysyl-[protein] + (6R)-5,10-methylene-5,6,7,8-tetrahydrofolate + NH4(+). Functionally, the glycine cleavage system catalyzes the degradation of glycine. This is Aminomethyltransferase from Geobacillus thermodenitrificans (strain NG80-2).